A 153-amino-acid polypeptide reads, in one-letter code: Prostaglandin E synthase (153 aa).

At 1-13 (MPPPVLALVSGQA) the chain is on the lumenal side. A helical membrane pass occupies residues 14–42 (LPAFLLCSTLLVIKMYVVAVITGQVRLRK). Arg39 lines the glutathione pocket. At 43–61 (KAFANPEDALRHGGLQYCR) the chain is on the cytoplasmic side. A helical membrane pass occupies residues 62-91 (SDQDVDRCLRAHRNDMETIYPFLFLGFVYS). A glutathione-binding site is contributed by 74–78 (RNDME). At 92 to 96 (FLGPD) the chain is on the lumenal side. A helical transmembrane segment spans residues 97–120 (PFIAQMHFLVFFLGRMVHTVAYLG). Positions 114 and 118 each coordinate glutathione. The Cytoplasmic segment spans residues 121-124 (KLRA). A helical membrane pass occupies residues 125-153 (PTRSLAYTVAQLPCASMALQIVWEAACHL). A glutathione-binding site is contributed by 127–131 (RSLAY).

This sequence belongs to the MAPEG family. Homotrimer. Glutathione serves as cofactor.

Its subcellular location is the membrane. The protein resides in the cytoplasm. It localises to the perinuclear region. The catalysed reaction is prostaglandin H2 = prostaglandin E2. It catalyses the reaction 2-glyceryl-prostaglandin H2 = 2-glyceryl-prostaglandin E2. It carries out the reaction prostaglandin G2 = (15S)-15-hydroperoxy-prostaglandin E2. The enzyme catalyses 1-chloro-2,4-dinitrobenzene + glutathione = 2,4-dinitrophenyl-S-glutathione + chloride + H(+). The catalysed reaction is (5S)-hydroperoxy-(6E,8Z,11Z,14Z)-eicosatetraenoate + 2 glutathione = (5S)-hydroxy-(6E,8Z,11Z,14Z)-eicosatetraenoate + glutathione disulfide + H2O. It participates in lipid metabolism; prostaglandin biosynthesis. In terms of biological role, terminal enzyme of the cyclooxygenase (COX)-2-mediated prostaglandin E2 (PGE2) biosynthetic pathway. Catalyzes the glutathione-dependent oxidoreduction of prostaglandin endoperoxide H2 (PGH2) to prostaglandin E2 (PGE2) in response to inflammatory stimuli. Plays a key role in inflammation response, fever and pain. Also catalyzes the oxidoreduction of endocannabinoids into prostaglandin glycerol esters and PGG2 into 15-hydroperoxy-PGE2. In addition, displays low glutathione transferase and glutathione-dependent peroxidase activities, toward 1-chloro-2,4-dinitrobenzene and 5-hydroperoxyicosatetraenoic acid (5-HPETE), respectively. The protein is Prostaglandin E synthase (PTGES) of Canis lupus familiaris (Dog).